The chain runs to 114 residues: Iron-sulfur cluster insertion protein ErpA (114 aa).

3 residues coordinate iron-sulfur cluster: cysteine 42, cysteine 106, and cysteine 108.

The protein belongs to the HesB/IscA family. In terms of assembly, homodimer. It depends on iron-sulfur cluster as a cofactor.

Required for insertion of 4Fe-4S clusters for at least IspG. This is Iron-sulfur cluster insertion protein ErpA from Klebsiella pneumoniae subsp. pneumoniae (strain ATCC 700721 / MGH 78578).